A 210-amino-acid polypeptide reads, in one-letter code: Protoporphyrinogen IX oxidase (210 aa).

5 helical membrane-spanning segments follow: residues Trp22–Val42, Tyr74–Phe94, Gly103–Gly123, Phe141–Phe161, and Leu165–Ile185. His27 contacts heme. A heme-binding site is contributed by Lys108.

The protein belongs to the HemJ family. In terms of assembly, homodimer. Can also form higher oligomers, most probably tetramers. Interacts with Sll1106, however it is unlikely that Sll1106 is required for PPO function. Heme b serves as cofactor.

It is found in the cell membrane. The catalysed reaction is protoporphyrinogen IX + 3 A = protoporphyrin IX + 3 AH2. It participates in porphyrin-containing compound metabolism; protoporphyrin-IX biosynthesis; protoporphyrin-IX from protoporphyrinogen-IX: step 1/1. Its function is as follows. Catalyzes the oxidation of protoporphyrinogen IX to protoporphyrin IX. Is involved in the biosynthesis of tetrapyrrole molecules like heme and chlorophyll. Does not use oxygen or artificial electron acceptors such as menadione or benzoquinone. Is functionally coupled with coproporphyrinogen III oxidase (CPO). Is essential for growth. The sequence is that of Protoporphyrinogen IX oxidase from Synechocystis sp. (strain ATCC 27184 / PCC 6803 / Kazusa).